The chain runs to 156 residues: Ribosomal RNA large subunit methyltransferase H (156 aa).

S-adenosyl-L-methionine is bound by residues Leu-73, Gly-104, and 123–128 (LSALTL).

Belongs to the RNA methyltransferase RlmH family. Homodimer.

It is found in the cytoplasm. The enzyme catalyses pseudouridine(1915) in 23S rRNA + S-adenosyl-L-methionine = N(3)-methylpseudouridine(1915) in 23S rRNA + S-adenosyl-L-homocysteine + H(+). In terms of biological role, specifically methylates the pseudouridine at position 1915 (m3Psi1915) in 23S rRNA. This is Ribosomal RNA large subunit methyltransferase H from Shewanella woodyi (strain ATCC 51908 / MS32).